The following is a 158-amino-acid chain: Large ribosomal subunit protein uL11 (158 aa).

It belongs to the universal ribosomal protein uL11 family. In terms of assembly, part of the ribosomal stalk of the 50S ribosomal subunit. Interacts with L10 and the large rRNA to form the base of the stalk. L10 forms an elongated spine to which L12 dimers bind in a sequential fashion forming a multimeric L10(L12)X complex.

Its function is as follows. Forms part of the ribosomal stalk which helps the ribosome interact with GTP-bound translation factors. The polypeptide is Large ribosomal subunit protein uL11 (Methanocella arvoryzae (strain DSM 22066 / NBRC 105507 / MRE50)).